Reading from the N-terminus, the 289-residue chain is Acetyl-coenzyme A carboxylase carboxyl transferase subunit beta (289 aa).

Residues 28 to 289 form the CoA carboxyltransferase N-terminal domain; the sequence is VMTKCPKCKK…QGGGMAVWQS (262 aa). Positions 32, 35, 51, and 54 each coordinate Zn(2+). The segment at 32-54 adopts a C4-type zinc-finger fold; it reads CPKCKKIMYTKELLKNLKVCVNC.

The protein belongs to the AccD/PCCB family. Acetyl-CoA carboxylase is a heterohexamer composed of biotin carboxyl carrier protein (AccB), biotin carboxylase (AccC) and two subunits each of ACCase subunit alpha (AccA) and ACCase subunit beta (AccD). Zn(2+) is required as a cofactor.

It is found in the cytoplasm. It catalyses the reaction N(6)-carboxybiotinyl-L-lysyl-[protein] + acetyl-CoA = N(6)-biotinyl-L-lysyl-[protein] + malonyl-CoA. It functions in the pathway lipid metabolism; malonyl-CoA biosynthesis; malonyl-CoA from acetyl-CoA: step 1/1. In terms of biological role, component of the acetyl coenzyme A carboxylase (ACC) complex. Biotin carboxylase (BC) catalyzes the carboxylation of biotin on its carrier protein (BCCP) and then the CO(2) group is transferred by the transcarboxylase to acetyl-CoA to form malonyl-CoA. The protein is Acetyl-coenzyme A carboxylase carboxyl transferase subunit beta of Bacillus mycoides (strain KBAB4) (Bacillus weihenstephanensis).